Reading from the N-terminus, the 566-residue chain is Phenylalanine--tRNA ligase beta subunit (566 aa).

One can recognise a B5 domain in the interval 287–362 (YFQEEVEFDV…IGEGLASFYP (76 aa)). Mg(2+)-binding residues include D340, D346, E349, and D350.

This sequence belongs to the phenylalanyl-tRNA synthetase beta subunit family. Type 2 subfamily. In terms of assembly, tetramer of two alpha and two beta subunits. The cofactor is Mg(2+).

The protein localises to the cytoplasm. It carries out the reaction tRNA(Phe) + L-phenylalanine + ATP = L-phenylalanyl-tRNA(Phe) + AMP + diphosphate + H(+). The protein is Phenylalanine--tRNA ligase beta subunit of Borrelia garinii subsp. bavariensis (strain ATCC BAA-2496 / DSM 23469 / PBi) (Borreliella bavariensis).